The following is a 485-amino-acid chain: ATP synthase subunit beta 2 (485 aa).

Residues 1 to 10 are compositionally biased toward basic and acidic residues; the sequence is MSGMGEKSEQ. The segment at 1–27 is disordered; that stretch reads MSGMGEKSEQISKSARSTDPQEQESVA. A compositionally biased stretch (polar residues) spans 11–24; sequence ISKSARSTDPQEQE. Residue 177 to 184 coordinates ATP; the sequence is GGAGVGKT.

This sequence belongs to the ATPase alpha/beta chains family. As to quaternary structure, F-type ATPases have 2 components, CF(1) - the catalytic core - and CF(0) - the membrane proton channel. CF(1) has five subunits: alpha(3), beta(3), gamma(1), delta(1), epsilon(1). CF(0) has three main subunits: a(1), b(2) and c(9-12). The alpha and beta chains form an alternating ring which encloses part of the gamma chain. CF(1) is attached to CF(0) by a central stalk formed by the gamma and epsilon chains, while a peripheral stalk is formed by the delta and b chains.

The protein resides in the cell inner membrane. It carries out the reaction ATP + H2O + 4 H(+)(in) = ADP + phosphate + 5 H(+)(out). Its function is as follows. Produces ATP from ADP in the presence of a proton gradient across the membrane. The catalytic sites are hosted primarily by the beta subunits. The chain is ATP synthase subunit beta 2 from Nitrosomonas eutropha (strain DSM 101675 / C91 / Nm57).